Here is a 546-residue protein sequence, read N- to C-terminus: ATP synthase subunit alpha (546 aa).

Residue 173 to 180 participates in ATP binding; the sequence is GDRQTGKT. The disordered stretch occupies residues 520-546; that stretch reads VDKKTAPKSVTPVDQEQIKAGKAQEKK. The span at 535 to 546 shows a compositional bias: basic and acidic residues; sequence EQIKAGKAQEKK.

This sequence belongs to the ATPase alpha/beta chains family. As to quaternary structure, F-type ATPases have 2 components, CF(1) - the catalytic core - and CF(0) - the membrane proton channel. CF(1) has five subunits: alpha(3), beta(3), gamma(1), delta(1), epsilon(1). CF(0) has three main subunits: a(1), b(2) and c(9-12). The alpha and beta chains form an alternating ring which encloses part of the gamma chain. CF(1) is attached to CF(0) by a central stalk formed by the gamma and epsilon chains, while a peripheral stalk is formed by the delta and b chains.

The protein resides in the cell membrane. It carries out the reaction ATP + H2O + 4 H(+)(in) = ADP + phosphate + 5 H(+)(out). Functionally, produces ATP from ADP in the presence of a proton gradient across the membrane. The alpha chain is a regulatory subunit. This is ATP synthase subunit alpha from Bifidobacterium animalis subsp. lactis (strain AD011).